Reading from the N-terminus, the 159-residue chain is UPF0262 protein Dshi_0980 (159 aa).

It belongs to the UPF0262 family.

In Dinoroseobacter shibae (strain DSM 16493 / NCIMB 14021 / DFL 12), this protein is UPF0262 protein Dshi_0980.